The sequence spans 180 residues: Crossover junction endodeoxyribonuclease RuvC (180 aa).

Active-site residues include D7, E66, and D138. The Mg(2+) site is built by D7, E66, and D138.

Belongs to the RuvC family. Homodimer which binds Holliday junction (HJ) DNA. The HJ becomes 2-fold symmetrical on binding to RuvC with unstacked arms; it has a different conformation from HJ DNA in complex with RuvA. In the full resolvosome a probable DNA-RuvA(4)-RuvB(12)-RuvC(2) complex forms which resolves the HJ. Mg(2+) serves as cofactor.

The protein localises to the cytoplasm. It catalyses the reaction Endonucleolytic cleavage at a junction such as a reciprocal single-stranded crossover between two homologous DNA duplexes (Holliday junction).. Its function is as follows. The RuvA-RuvB-RuvC complex processes Holliday junction (HJ) DNA during genetic recombination and DNA repair. Endonuclease that resolves HJ intermediates. Cleaves cruciform DNA by making single-stranded nicks across the HJ at symmetrical positions within the homologous arms, yielding a 5'-phosphate and a 3'-hydroxyl group; requires a central core of homology in the junction. The consensus cleavage sequence is 5'-(A/T)TT(C/G)-3'. Cleavage occurs on the 3'-side of the TT dinucleotide at the point of strand exchange. HJ branch migration catalyzed by RuvA-RuvB allows RuvC to scan DNA until it finds its consensus sequence, where it cleaves and resolves the cruciform DNA. The sequence is that of Crossover junction endodeoxyribonuclease RuvC from Burkholderia lata (strain ATCC 17760 / DSM 23089 / LMG 22485 / NCIMB 9086 / R18194 / 383).